Here is a 551-residue protein sequence, read N- to C-terminus: Malate synthase, glyoxysomal (551 aa).

Arg174 acts as the Proton acceptor in catalysis. Asp458 functions as the Proton donor in the catalytic mechanism.

Belongs to the malate synthase family.

It is found in the glyoxysome. The catalysed reaction is glyoxylate + acetyl-CoA + H2O = (S)-malate + CoA + H(+). It participates in carbohydrate metabolism; glyoxylate cycle; (S)-malate from isocitrate: step 2/2. In Candida tropicalis (Yeast), this protein is Malate synthase, glyoxysomal (PMS1).